A 389-amino-acid chain; its full sequence is Chalcone synthase 1 (389 aa).

Cys164 is an active-site residue.

This sequence belongs to the thiolase-like superfamily. Chalcone/stilbene synthases family.

The enzyme catalyses (E)-4-coumaroyl-CoA + 3 malonyl-CoA + 3 H(+) = 2',4,4',6'-tetrahydroxychalcone + 3 CO2 + 4 CoA. It participates in secondary metabolite biosynthesis; flavonoid biosynthesis. Functionally, the primary product of this enzyme is 4,2',4',6'-tetrahydroxychalcone (also termed naringenin-chalcone or chalcone) which can under specific conditions spontaneously isomerize into naringenin. This Camellia sinensis (Tea plant) protein is Chalcone synthase 1 (CHS1).